Reading from the N-terminus, the 389-residue chain is Protein CysO (389 aa).

Lys127 bears the N6-(pyridoxal phosphate)lysine mark. Residues Asn155, 261–265 (GTSGH), and Ser341 contribute to the pyridoxal 5'-phosphate site.

Belongs to the cysteine synthase/cystathionine beta-synthase family. Homodimer. Pyridoxal 5'-phosphate is required as a cofactor.

The catalysed reaction is O-acetyl-L-serine + hydrogen sulfide = L-cysteine + acetate. The enzyme catalyses O-phospho-L-serine + hydrogen sulfide + H(+) = L-cysteine + phosphate. It carries out the reaction L-homocysteine + L-serine = L,L-cystathionine + H2O. The protein operates within amino-acid biosynthesis; L-cysteine biosynthesis; L-cysteine from L-serine: step 2/2. Cysteine synthase that can also catalyze the synthesis of S-sulfo-L-cysteine from thiosulfate and O(3)-acetyl-L-serine, as well as the sulfhydrylation of L-serine by sulfide. This chain is Protein CysO (cysO), found in Aeropyrum pernix (strain ATCC 700893 / DSM 11879 / JCM 9820 / NBRC 100138 / K1).